Reading from the N-terminus, the 305-residue chain is Tyrosine recombinase XerD (305 aa).

The Core-binding (CB) domain maps to 2-87; it reads SQGEAWADAF…AVRQFYRFVL (86 aa). Residues 108–295 form the Tyr recombinase domain; it reads PLPKVLERDE…AGEHLAHIVQ (188 aa). Residues Arg-149, Lys-173, His-247, Arg-250, and His-273 contribute to the active site. Catalysis depends on Tyr-282, which acts as the O-(3'-phospho-DNA)-tyrosine intermediate.

Belongs to the 'phage' integrase family. XerD subfamily. Forms a cyclic heterotetrameric complex composed of two molecules of XerC and two molecules of XerD.

Its subcellular location is the cytoplasm. In terms of biological role, site-specific tyrosine recombinase, which acts by catalyzing the cutting and rejoining of the recombining DNA molecules. The XerC-XerD complex is essential to convert dimers of the bacterial chromosome into monomers to permit their segregation at cell division. It also contributes to the segregational stability of plasmids. This Caulobacter vibrioides (strain ATCC 19089 / CIP 103742 / CB 15) (Caulobacter crescentus) protein is Tyrosine recombinase XerD.